Here is a 339-residue protein sequence, read N- to C-terminus: Anthranilate phosphoribosyltransferase (339 aa).

5-phospho-alpha-D-ribose 1-diphosphate-binding positions include Gly81, 84–85 (GD), Thr89, 91–94 (NIST), 109–117 (KHGNRNLSS), and Ala121. An anthranilate-binding site is contributed by Gly81. Ser93 serves as a coordination point for Mg(2+). Anthranilate is bound at residue Asn112. Arg167 provides a ligand contact to anthranilate. Positions 226 and 227 each coordinate Mg(2+).

This sequence belongs to the anthranilate phosphoribosyltransferase family. Homodimer. Requires Mg(2+) as cofactor.

The enzyme catalyses N-(5-phospho-beta-D-ribosyl)anthranilate + diphosphate = 5-phospho-alpha-D-ribose 1-diphosphate + anthranilate. Its pathway is amino-acid biosynthesis; L-tryptophan biosynthesis; L-tryptophan from chorismate: step 2/5. Catalyzes the transfer of the phosphoribosyl group of 5-phosphorylribose-1-pyrophosphate (PRPP) to anthranilate to yield N-(5'-phosphoribosyl)-anthranilate (PRA). The sequence is that of Anthranilate phosphoribosyltransferase from Roseobacter denitrificans (strain ATCC 33942 / OCh 114) (Erythrobacter sp. (strain OCh 114)).